A 211-amino-acid chain; its full sequence is Small ribosomal subunit protein eS1 (211 aa).

Belongs to the eukaryotic ribosomal protein eS1 family.

The chain is Small ribosomal subunit protein eS1 from Methanothrix thermoacetophila (strain DSM 6194 / JCM 14653 / NBRC 101360 / PT) (Methanosaeta thermophila).